Consider the following 475-residue polypeptide: D-lactate dehydrogenase (475 aa).

One can recognise an FAD-binding PCMH-type domain in the interval 43-222; that stretch reads YGKARPEVLV…TELTLKVIPA (180 aa).

The protein belongs to the FAD-binding oxidoreductase/transferase type 4 family. FAD is required as a cofactor. Requires Zn(2+) as cofactor.

The catalysed reaction is (R)-lactate + A = pyruvate + AH2. Functionally, catalyzes the dehydrogenation of (R)-lactate (D-lactate) to pyruvate. Active in vitro with the artificial electron acceptor 2,6-dichlorophenolindophenol (DCPIP), but not with NAD, NADP, or cytochrome c. Also displays a very low oxidase activity in vitro on D-lactate and L-lactate with O2 as the electron acceptor, but this activity is most likely not physiological. The protein is D-lactate dehydrogenase of Anaerostipes hadrus.